A 312-amino-acid chain; its full sequence is Methionyl-tRNA formyltransferase (312 aa).

Residue 117–120 (SLLP) participates in (6S)-5,6,7,8-tetrahydrofolate binding.

Belongs to the Fmt family.

It catalyses the reaction L-methionyl-tRNA(fMet) + (6R)-10-formyltetrahydrofolate = N-formyl-L-methionyl-tRNA(fMet) + (6S)-5,6,7,8-tetrahydrofolate + H(+). In terms of biological role, attaches a formyl group to the free amino group of methionyl-tRNA(fMet). The formyl group appears to play a dual role in the initiator identity of N-formylmethionyl-tRNA by promoting its recognition by IF2 and preventing the misappropriation of this tRNA by the elongation apparatus. The sequence is that of Methionyl-tRNA formyltransferase from Bordetella pertussis (strain Tohama I / ATCC BAA-589 / NCTC 13251).